We begin with the raw amino-acid sequence, 465 residues long: Asparagine--tRNA ligase (465 aa).

This sequence belongs to the class-II aminoacyl-tRNA synthetase family. As to quaternary structure, homodimer.

The protein resides in the cytoplasm. The catalysed reaction is tRNA(Asn) + L-asparagine + ATP = L-asparaginyl-tRNA(Asn) + AMP + diphosphate + H(+). This chain is Asparagine--tRNA ligase, found in Clostridium perfringens (strain SM101 / Type A).